The chain runs to 417 residues: Inactive GDSL esterase/lipase-like protein 25 (417 aa).

An N-terminal signal peptide occupies residues 1-50; sequence MLLIPSFTANSNEPPPSKLSLSDLSMAILKSHFFLLFPLLLLHFHTVSFA. Residues N160, N308, and N311 are each glycosylated (N-linked (GlcNAc...) asparagine). H331 is a catalytic residue.

The protein belongs to the 'GDSL' lipolytic enzyme family. As to quaternary structure, interacts with the PYK10 complex and TGG2, but not with TGG1 or PEN2. Expressed throughout the seedling, rosette leaves, roots, inflorescence and imbibed seed, but not in pollen.

It localises to the vacuole. The protein resides in the endoplasmic reticulum. Functionally, involved in organization of the endomembrane system and is required for endoplasmic reticulum morphology and organelle distribution. May act by inhibiting the formation of PYK10 complex by binding to GLL23 and exporting it from the ER. Required for proper subcellular localization of myrosinase TGG2. Has no lipase or esterase activity. This chain is Inactive GDSL esterase/lipase-like protein 25 (MVP1), found in Arabidopsis thaliana (Mouse-ear cress).